Reading from the N-terminus, the 299-residue chain is GTPase Era (299 aa).

In terms of domain architecture, Era-type G spans 4–171 (KSGFVAILGR…VDILSENLDE (168 aa)). The G1 stretch occupies residues 12–19 (GRPNVGKS). Residue 12–19 (GRPNVGKS) participates in GTP binding. Residues 38-42 (QTTRN) form a G2 region. The interval 59-62 (DTPG) is G3. Residues 59–63 (DTPGI) and 121–124 (NKID) each bind GTP. The segment at 121–124 (NKID) is G4. Positions 150-152 (ISA) are G5. One can recognise a KH type-2 domain in the interval 202 to 280 (TREEIPHSVA…FLETWVKVKK (79 aa)).

The protein belongs to the TRAFAC class TrmE-Era-EngA-EngB-Septin-like GTPase superfamily. Era GTPase family. Monomer.

It is found in the cytoplasm. The protein localises to the cell membrane. An essential GTPase that binds both GDP and GTP, with rapid nucleotide exchange. Plays a role in 16S rRNA processing and 30S ribosomal subunit biogenesis and possibly also in cell cycle regulation and energy metabolism. This chain is GTPase Era, found in Streptococcus pneumoniae (strain Hungary19A-6).